The following is a 165-amino-acid chain: Small ribosomal subunit protein eS10 (165 aa).

Tyrosine 12 is subject to Phosphotyrosine. The interval valine 90 to glutamine 165 is disordered. The span at serine 97 to arginine 128 shows a compositional bias: basic and acidic residues. Residues lysine 138 and lysine 139 each participate in a glycyl lysine isopeptide (Lys-Gly) (interchain with G-Cter in ubiquitin) cross-link. The residue at position 146 (serine 146) is a Phosphoserine. At arginine 153 the chain carries Omega-N-methylarginine. Positions glycine 154–glutamine 165 are enriched in gly residues. Arginine 158 and arginine 160 each carry symmetric dimethylarginine.

The protein belongs to the eukaryotic ribosomal protein eS10 family. Component of the small ribosomal subunit. The methylated form interacts with NPM1. Post-translationally, methylated by PRMT5. Methylation is necessary for its interaction with NPS1, its localization in the granular component (GC) region of the nucleolus, for the proper assembly of ribosomes, protein synthesis and optimal cell proliferation. Monoubiquitinated by ZNF598 when a ribosome has stalled during translation of poly(A) sequences, leading to preclude synthesis of a long poly-lysine tail and initiate the ribosome quality control (RQC) pathway to degrade the potentially detrimental aberrant nascent polypeptide. Deubiquitinated by OTUD3 and USP21, antagonizing ZNF598 activity. Deubiquitinated by OTUD1, antagonizing ZNF598 activity and stimulating formation of polysomes: deubiquitination by OTUD1 promotes stability and translation of a subset mRNAs with a high abundance of rare codons can limit the translation rate. Deubiquitinated by USP10.

Its subcellular location is the cytoplasm. The protein localises to the nucleus. The protein resides in the nucleolus. Functionally, component of the 40S ribosomal subunit. The ribosome is a large ribonucleoprotein complex responsible for the synthesis of proteins in the cell. The sequence is that of Small ribosomal subunit protein eS10 (Rps10) from Rattus norvegicus (Rat).